We begin with the raw amino-acid sequence, 231 residues long: MQLLTFCSFKGGAGKTTALMGLCAALANDGKRVALFDADENRPLTRWRENALQSSTWDPRCEVYSADEMPLLEAAYENAELEGFDYALADTRGGSSELNNTIIASSNLLLIPTMLTPLDIDEALSTYRYVIELMLSENLAIPTAVLRQRVPVGRLTTSQRRMSEMLESLPVVPSPMHERDAFSAMKERGMLHLTLLNMGTDPTMRLIERNLRIAMEEVVVISKLISKILEA.

This Rhizobium radiobacter (Agrobacterium tumefaciens) protein is Protein virC1 (virC1).